A 485-amino-acid chain; its full sequence is UDP-N-acetylmuramoyl-L-alanyl-D-glutamate--2,6-diaminopimelate ligase (485 aa).

Ser32 provides a ligand contact to UDP-N-acetyl-alpha-D-muramoyl-L-alanyl-D-glutamate. 111-117 serves as a coordination point for ATP; that stretch reads GTNGKTT. Residues 153-154, Ser180, and Arg188 contribute to the UDP-N-acetyl-alpha-D-muramoyl-L-alanyl-D-glutamate site; that span reads TT. Lys220 bears the N6-carboxylysine mark. Residues Arg382, 405–408, Gly455, and Glu459 contribute to the meso-2,6-diaminopimelate site; that span reads DNPR. Positions 405–408 match the Meso-diaminopimelate recognition motif motif; sequence DNPR.

Belongs to the MurCDEF family. MurE subfamily. Requires Mg(2+) as cofactor. In terms of processing, carboxylation is probably crucial for Mg(2+) binding and, consequently, for the gamma-phosphate positioning of ATP.

The protein localises to the cytoplasm. It catalyses the reaction UDP-N-acetyl-alpha-D-muramoyl-L-alanyl-D-glutamate + meso-2,6-diaminopimelate + ATP = UDP-N-acetyl-alpha-D-muramoyl-L-alanyl-gamma-D-glutamyl-meso-2,6-diaminopimelate + ADP + phosphate + H(+). It functions in the pathway cell wall biogenesis; peptidoglycan biosynthesis. In terms of biological role, catalyzes the addition of meso-diaminopimelic acid to the nucleotide precursor UDP-N-acetylmuramoyl-L-alanyl-D-glutamate (UMAG) in the biosynthesis of bacterial cell-wall peptidoglycan. This chain is UDP-N-acetylmuramoyl-L-alanyl-D-glutamate--2,6-diaminopimelate ligase, found in Chlamydia felis (strain Fe/C-56) (Chlamydophila felis).